The sequence spans 89 residues: Cornifin-A (89 aa).

Residues methionine 1 to proline 29 are disordered. 8 repeat units span residues serine 3 to proline 14, glutamine 18 to proline 29, glutamate 31 to lysine 38, glutamate 39 to proline 46, glutamate 47 to proline 54, glutamate 55 to proline 62, glutamate 63 to proline 70, and glutamate 71 to threonine 78. Positions serine 3–proline 29 are 2 X 12 AA approximate repeats. The 6 X 8 AA approximate tandem repeats stretch occupies residues glutamate 31–threonine 78. The interval lysine 68 to lysine 89 is disordered. Residues serine 75–lysine 89 are compositionally biased toward polar residues.

Belongs to the cornifin (SPRR) family.

The protein localises to the cytoplasm. Functionally, cross-linked envelope protein of keratinocytes. It is a keratinocyte protein that first appears in the cell cytosol, but ultimately becomes cross-linked to membrane proteins by transglutaminase. All that results in the formation of an insoluble envelope beneath the plasma membrane. This Homo sapiens (Human) protein is Cornifin-A (SPRR1A).